Consider the following 180-residue polypeptide: Large ribosomal subunit protein uL5 (180 aa).

This sequence belongs to the universal ribosomal protein uL5 family. Part of the 50S ribosomal subunit; part of the 5S rRNA/L5/L18/L25 subcomplex. Contacts the 5S rRNA and the P site tRNA. Forms a bridge to the 30S subunit in the 70S ribosome.

This is one of the proteins that bind and probably mediate the attachment of the 5S RNA into the large ribosomal subunit, where it forms part of the central protuberance. In the 70S ribosome it contacts protein S13 of the 30S subunit (bridge B1b), connecting the 2 subunits; this bridge is implicated in subunit movement. Contacts the P site tRNA; the 5S rRNA and some of its associated proteins might help stabilize positioning of ribosome-bound tRNAs. This chain is Large ribosomal subunit protein uL5, found in Cupriavidus metallidurans (strain ATCC 43123 / DSM 2839 / NBRC 102507 / CH34) (Ralstonia metallidurans).